The following is a 371-amino-acid chain: MKMGHFEMVTTLLAAAVLMDIFQVKAEVLDMAENAFDDEYLKCKSRMESKYIPQMKREEWANDALLRMVWDNAEIQWEARKAQLFLPRNFKDTYGIALTAYVNEAQEQTSFYHTFSSAVKMAGLSRRRYIYNFPFKAFHFYLVRALQLLRRPCEKSYKTVVYSTSPDISFTFGEQNQARLGNFTLAYSAKPETADNQRVLTIQTCFGVAVGKFLNKEDDSVVLIPLSEVFQVSRKGTSNDLVLQSINSTCSYYECAFLGGLKTENCIANAEYIDPRYLYNPDMDNQKLEDSGRNNLDPDRMPEIKVLQTEENPLLPDEKPDRSRGKANNPTPGLVPGPKSHPSASSGNTLLPSVMASTILLVASAVNFIEL.

An N-terminal signal peptide occupies residues 1–26 (MKMGHFEMVTTLLAAAVLMDIFQVKA). A disulfide bridge links cysteine 43 with cysteine 255. Residues 64–250 (ALLRMVWDNA…LVLQSINSTC (187 aa)) enclose the TR mART core domain. Positions 101 and 182 each coordinate NAD(+). The interval 306 to 346 (VLQTEENPLLPDEKPDRSRGKANNPTPGLVPGPKSHPSASS) is disordered. The GPI-anchor amidated serine moiety is linked to residue serine 345. Positions 346–371 (SGNTLLPSVMASTILLVASAVNFIEL) are cleaved as a propeptide — removed in mature form.

It belongs to the Arg-specific ADP-ribosyltransferase family.

It is found in the cell membrane. It catalyses the reaction L-arginyl-[protein] + NAD(+) = N(omega)-(ADP-D-ribosyl)-L-arginyl-[protein] + nicotinamide + H(+). The polypeptide is Ecto-ADP-ribosyltransferase 3 (Art3) (Mus musculus (Mouse)).